Here is a 299-residue protein sequence, read N- to C-terminus: Methionyl-tRNA formyltransferase (299 aa).

109–112 (SLLP) provides a ligand contact to (6S)-5,6,7,8-tetrahydrofolate.

The protein belongs to the Fmt family.

It catalyses the reaction L-methionyl-tRNA(fMet) + (6R)-10-formyltetrahydrofolate = N-formyl-L-methionyl-tRNA(fMet) + (6S)-5,6,7,8-tetrahydrofolate + H(+). Its function is as follows. Attaches a formyl group to the free amino group of methionyl-tRNA(fMet). The formyl group appears to play a dual role in the initiator identity of N-formylmethionyl-tRNA by promoting its recognition by IF2 and preventing the misappropriation of this tRNA by the elongation apparatus. The chain is Methionyl-tRNA formyltransferase from Dinoroseobacter shibae (strain DSM 16493 / NCIMB 14021 / DFL 12).